The sequence spans 274 residues: Thymidylate synthase (274 aa).

Arg-21 contributes to the dUMP binding site. His-51 lines the (6R)-5,10-methylene-5,6,7,8-tetrahydrofolate pocket. Position 123–124 (123–124 (RR)) interacts with dUMP. The active-site Nucleophile is Cys-156. DUMP-binding positions include 176 to 179 (RSAD), Asn-187, and 217 to 219 (HIY). Asp-179 is a binding site for (6R)-5,10-methylene-5,6,7,8-tetrahydrofolate. Residue Ala-273 coordinates (6R)-5,10-methylene-5,6,7,8-tetrahydrofolate.

This sequence belongs to the thymidylate synthase family. Bacterial-type ThyA subfamily. In terms of assembly, homodimer.

It is found in the cytoplasm. The enzyme catalyses dUMP + (6R)-5,10-methylene-5,6,7,8-tetrahydrofolate = 7,8-dihydrofolate + dTMP. Its pathway is pyrimidine metabolism; dTTP biosynthesis. Catalyzes the reductive methylation of 2'-deoxyuridine-5'-monophosphate (dUMP) to 2'-deoxythymidine-5'-monophosphate (dTMP) while utilizing 5,10-methylenetetrahydrofolate (mTHF) as the methyl donor and reductant in the reaction, yielding dihydrofolate (DHF) as a by-product. This enzymatic reaction provides an intracellular de novo source of dTMP, an essential precursor for DNA biosynthesis. The protein is Thymidylate synthase of Christiangramia forsetii (strain DSM 17595 / CGMCC 1.15422 / KT0803) (Gramella forsetii).